An 85-amino-acid polypeptide reads, in one-letter code: Large ribosomal subunit protein bL27 (85 aa).

It belongs to the bacterial ribosomal protein bL27 family.

This chain is Large ribosomal subunit protein bL27, found in Sodalis glossinidius (strain morsitans).